The sequence spans 331 residues: MSDIQSLTTQALADVAAAQSPDVLEQLRVALLGKSGSITSQLKQLGALPADERKAAGEAINQARDALSHALGERKAVLEDAALDARLAAESIDITLPGRSAERAGLHPITRTLERITGIFGRLGYELSEGPEIEDDWHNFEALNFPPHHPARAMHDTFYFGDGRLLRTHTSGVQVRYMGDHAPPLRMIAAGKVYRSDSDQTHSPMFHQVEGLLVDEHSTFADLKGTLAEFVRAFFERDFEMRFRPSYFPFVEPGAEVDIAWQQPDGSTRWLEVLGCGMVHPNVLRNVGIDPERYTGFAFGMGVERFAMLRYGVNDLRAFFENDVRFLKQFA.

Glu252 provides a ligand contact to Mg(2+).

Belongs to the class-II aminoacyl-tRNA synthetase family. Phe-tRNA synthetase alpha subunit type 1 subfamily. As to quaternary structure, tetramer of two alpha and two beta subunits. The cofactor is Mg(2+).

It is found in the cytoplasm. It catalyses the reaction tRNA(Phe) + L-phenylalanine + ATP = L-phenylalanyl-tRNA(Phe) + AMP + diphosphate + H(+). This chain is Phenylalanine--tRNA ligase alpha subunit, found in Stenotrophomonas maltophilia (strain R551-3).